The primary structure comprises 138 residues: Large ribosomal subunit protein uL16 (138 aa).

The span at 1-16 (MLIPRRVKHRKQHHPG) shows a compositional bias: basic residues. Residues 1-24 (MLIPRRVKHRKQHHPGRSGAATGG) are disordered.

It belongs to the universal ribosomal protein uL16 family. In terms of assembly, part of the 50S ribosomal subunit.

Functionally, binds 23S rRNA and is also seen to make contacts with the A and possibly P site tRNAs. The polypeptide is Large ribosomal subunit protein uL16 (Paenarthrobacter aurescens (strain TC1)).